Consider the following 301-residue polypeptide: Peptidyl-prolyl isomerase CWC27 (301 aa).

A PPIase cyclophilin-type domain is found at 9 to 159 (TTAKCILYTT…YPAVLKDVEI (151 aa)). The interval 251-280 (TELHDNVDEATTKETESQENIKEEPMDKRE) is disordered.

It belongs to the cyclophilin-type PPIase family. CWC27 subfamily. In terms of assembly, belongs to the CWC complex (or CEF1-associated complex), a spliceosome subcomplex composed of the U2, U5 and U6 snRNAs and at least BUD13, BUD31, BRR2, CDC40, CEF1, CLF1, CUS1, CWC2, CWC15, CWC21, CWC22, CWC23, CWC24, CWC25, CWC27, ECM2, HSH155, IST3, ISY1, LEA1, MSL1, NTC20, PRP8, PRP9, PRP11, PRP19, PRP21, PRP22, PRP45, PRP46, SLU7, SMB1, SMD1, SMD2, SMD3, SMX2, SMX3, SNT309, SNU114, SPP2, SYF1, SYF2, RSE1 and YJU2.

The protein localises to the cytoplasm. The protein resides in the nucleus. It carries out the reaction [protein]-peptidylproline (omega=180) = [protein]-peptidylproline (omega=0). Functionally, PPIases accelerate the folding of proteins. Catalyzes the cis-trans isomerization of proline imidic peptide bonds in oligopeptides. Involved in pre-mRNA splicing. This Saccharomyces cerevisiae (strain ATCC 204508 / S288c) (Baker's yeast) protein is Peptidyl-prolyl isomerase CWC27 (CWC27).